Consider the following 139-residue polypeptide: ATP synthase epsilon chain (139 aa).

Belongs to the ATPase epsilon chain family. F-type ATPases have 2 components, CF(1) - the catalytic core - and CF(0) - the membrane proton channel. CF(1) has five subunits: alpha(3), beta(3), gamma(1), delta(1), epsilon(1). CF(0) has three main subunits: a, b and c.

It is found in the cell membrane. Functionally, produces ATP from ADP in the presence of a proton gradient across the membrane. In Pediococcus pentosaceus (strain ATCC 25745 / CCUG 21536 / LMG 10740 / 183-1w), this protein is ATP synthase epsilon chain.